The following is an 85-amino-acid chain: Transcription factor 4 (85 aa).

Residues 7-60 (ERRMANNARERLRVRDINEAFKELGRMVQLHLKSDKPQTKLLILHQAVAVILSL) form the bHLH domain. The tract at residues 62 to 85 (QQVRERNLNPKAACLKRREEEKVS) is class A specific domain.

Efficient DNA binding requires dimerization with another bHLH protein. Forms homo- or heterooligomers with myogenin.

It localises to the nucleus. Functionally, transcription factor that binds to the immunoglobulin enhancer Mu-E5/KE5-motif. Involved in the initiation of neuronal differentiation. Binds to the E-box present in the somatostatin receptor 2 initiator element (SSTR2-INR) to activate transcription. This is Transcription factor 4 (TCF4) from Gallus gallus (Chicken).